The sequence spans 398 residues: Metalloprotease MmpA (398 aa).

Residue histidine 22 participates in Zn(2+) binding. The active site involves glutamate 23. Histidine 26 serves as a coordination point for Zn(2+). Helical transmembrane passes span 117–139 (FIAV…VILV), 316–338 (QFWL…IPVL), and 362–381 (AAGF…FAAW). In terms of domain architecture, PDZ spans 130-203 (AILVFAVILV…MPIDFAVERD (74 aa)).

The protein belongs to the peptidase M50B family. Requires Zn(2+) as cofactor.

It is found in the cell inner membrane. In terms of biological role, involved in the regulated intramembrane proteolysis (RIP) of the short isoform of PodJ protein (PodJS), during the swarmer-to-stalked transition. The cleavage occurs near or within the single transmembrane of PodJS thereby releasing the N-terminal segment into the cytoplasm for subsequent degradation. It contributes to preserve asymmetry in the next cell cycle through sequential degradation. The chain is Metalloprotease MmpA (mmpA) from Caulobacter vibrioides (strain ATCC 19089 / CIP 103742 / CB 15) (Caulobacter crescentus).